The sequence spans 740 residues: DNA-directed RNA polymerase subunit beta' (740 aa).

Positions 65, 67, 103, and 106 each coordinate Zn(2+). Mg(2+) is bound by residues Asp-539, Asp-541, and Asp-543.

It belongs to the RNA polymerase beta' chain family. RpoC1 subfamily. In terms of assembly, in plastids the minimal PEP RNA polymerase catalytic core is composed of four subunits: alpha, beta, beta', and beta''. When a (nuclear-encoded) sigma factor is associated with the core the holoenzyme is formed, which can initiate transcription. It depends on Mg(2+) as a cofactor. Zn(2+) is required as a cofactor.

It is found in the plastid. The protein resides in the chloroplast. It carries out the reaction RNA(n) + a ribonucleoside 5'-triphosphate = RNA(n+1) + diphosphate. Its function is as follows. DNA-dependent RNA polymerase catalyzes the transcription of DNA into RNA using the four ribonucleoside triphosphates as substrates. This Ostreococcus tauri protein is DNA-directed RNA polymerase subunit beta'.